The sequence spans 968 residues: RNA polymerase-associated protein RapA (968 aa).

The 171-residue stretch at 164 to 334 folds into the Helicase ATP-binding domain; the sequence is DVGRRHAPRV…FARLRLLDPN (171 aa). 177–184 contributes to the ATP binding site; the sequence is DEVGLGKT. A DEAH box motif is present at residues 280 to 283; that stretch reads DEAH. A Helicase C-terminal domain is found at 490–662; that stretch reads RVEWLMGYLT…YLASPDQTEG (173 aa).

It belongs to the SNF2/RAD54 helicase family. RapA subfamily. As to quaternary structure, interacts with the RNAP. Has a higher affinity for the core RNAP than for the holoenzyme. Its ATPase activity is stimulated by binding to RNAP.

Functionally, transcription regulator that activates transcription by stimulating RNA polymerase (RNAP) recycling in case of stress conditions such as supercoiled DNA or high salt concentrations. Probably acts by releasing the RNAP, when it is trapped or immobilized on tightly supercoiled DNA. Does not activate transcription on linear DNA. Probably not involved in DNA repair. The sequence is that of RNA polymerase-associated protein RapA from Shigella boydii serotype 18 (strain CDC 3083-94 / BS512).